The primary structure comprises 233 residues: Large ribosomal subunit protein uL1 (233 aa).

Belongs to the universal ribosomal protein uL1 family. Part of the 50S ribosomal subunit.

Functionally, binds directly to 23S rRNA. The L1 stalk is quite mobile in the ribosome, and is involved in E site tRNA release. In terms of biological role, protein L1 is also a translational repressor protein, it controls the translation of the L11 operon by binding to its mRNA. The protein is Large ribosomal subunit protein uL1 of Photorhabdus laumondii subsp. laumondii (strain DSM 15139 / CIP 105565 / TT01) (Photorhabdus luminescens subsp. laumondii).